A 614-amino-acid chain; its full sequence is uncharacterized protein (614 aa).

The disordered stretch occupies residues 23–68 (YPIPSHNGDGESEKNSSDSTSSKVNAKVTSSLQGAPSTNDENSVSP). Residues 49–68 (KVTSSLQGAPSTNDENSVSP) show a composition bias toward polar residues.

To C.trachomatis CT875.

This is an uncharacterized protein from Chlamydia muridarum (strain MoPn / Nigg).